Consider the following 167-residue polypeptide: Transmembrane protein B169L (167 aa).

Helical transmembrane passes span 28-48 and 60-80; these read NPFI…FAIC and TAIY…YVLN. Asn88 carries an N-linked (GlcNAc...) asparagine; by host glycan.

It belongs to the asfivirus B169L family.

It localises to the host membrane. The protein localises to the virion. In African swine fever virus (isolate Tick/Malawi/Lil 20-1/1983) (ASFV), this protein is Transmembrane protein B169L.